Consider the following 536-residue polypeptide: Lysosomal acid glucosylceramidase (536 aa).

The N-terminal stretch at 1 to 39 (MELSSPSREECPRPQGRVGIMAASLMGLLLLQAASWASG) is a signal peptide. 2 disulfides stabilise this stretch: cysteine 43-cysteine 55 and cysteine 57-cysteine 62. Residues asparagine 58, asparagine 98, and asparagine 185 are each glycosylated (N-linked (GlcNAc...) asparagine). Glutamate 274 serves as the catalytic Proton donor. Asparagine 309 carries an N-linked (GlcNAc...) asparagine glycan. The Nucleophile role is filled by glutamate 379. An N-linked (GlcNAc...) asparagine glycan is attached at asparagine 501.

The protein belongs to the glycosyl hydrolase 30 family. Interacts with saposin-C. Interacts with SCARB2. Interacts with TCP1. Interacts with GRN; this interaction prevents aggregation of GBA1-SCARB2 complex via interaction with HSPA1A upon stress.

The protein localises to the lysosome membrane. The catalysed reaction is a beta-D-glucosyl-(1&lt;-&gt;1')-N-acylsphing-4-enine + H2O = an N-acylsphing-4-enine + D-glucose. The enzyme catalyses a beta-D-galactosyl-(1&lt;-&gt;1')-N-acylsphing-4-enine + H2O = an N-acylsphing-4-enine + D-galactose. It catalyses the reaction cholesteryl 3-beta-D-glucoside + H2O = cholesterol + D-glucose. It carries out the reaction a beta-D-glucosyl-(1&lt;-&gt;1')-N-acylsphing-4-enine + cholesterol = cholesteryl 3-beta-D-glucoside + an N-acylsphing-4-enine. The catalysed reaction is beta-D-glucosyl-N-(9Z-octadecenoyl)-sphing-4E-enine + cholesterol = N-(9Z-octadecenoyl)-sphing-4-enine + cholesteryl 3-beta-D-glucoside. The enzyme catalyses beta-D-glucosyl-N-octanoylsphing-4E-enine + cholesterol = N-octanoylsphing-4-enine + cholesteryl 3-beta-D-glucoside. It catalyses the reaction beta-D-glucosyl-N-dodecanoylsphing-4-enine + cholesterol = N-dodecanoylsphing-4-enine + cholesteryl 3-beta-D-glucoside. It carries out the reaction beta-D-glucosyl-(1&lt;-&gt;1)-N-octadecanoylsphing-4-enine + cholesterol = N-octadecanoylsphing-4-enine + cholesteryl 3-beta-D-glucoside. The catalysed reaction is beta-D-glucosyl-(1&lt;-&gt;1')-N-(15Z-tetracosenoyl)-sphing-4-enine + cholesterol = N-(15Z-tetracosenoyl)-sphing-4-enine + cholesteryl 3-beta-D-glucoside. The enzyme catalyses a beta-D-galactosyl-(1&lt;-&gt;1')-N-acylsphing-4-enine + cholesterol = cholesteryl 3-beta-D-galactoside + an N-acylsphing-4-enine. It catalyses the reaction 1-(beta-D-galactosyl)-N-dodecanoylsphing-4-enine + cholesterol = cholesteryl 3-beta-D-galactoside + N-dodecanoylsphing-4-enine. It carries out the reaction a beta-D-xylosyl-(1&lt;-&gt;1')-N-acylsphing-4-enine + cholesterol = cholesteryl 3-beta-D-xyloside + an N-acylsphing-4-enine. The catalysed reaction is beta-D-xylosyl-(1&lt;-&gt;1')-N-(9Z-octadecenoyl)-sphing-4-enine + cholesterol = cholesteryl 3-beta-D-xyloside + N-(9Z-octadecenoyl)-sphing-4-enine. Its pathway is steroid metabolism; cholesterol metabolism. It functions in the pathway sphingolipid metabolism. Its function is as follows. Glucosylceramidase that catalyzes, within the lysosomal compartment, the hydrolysis of glucosylceramides/GlcCers (such as beta-D-glucosyl-(1&lt;-&gt;1')-N-acylsphing-4-enine) into free ceramides (such as N-acylsphing-4-enine) and glucose. Plays a central role in the degradation of complex lipids and the turnover of cellular membranes. Through the production of ceramides, participates in the PKC-activated salvage pathway of ceramide formation. Catalyzes the glucosylation of cholesterol, through a transglucosylation reaction where glucose is transferred from GlcCer to cholesterol. GlcCer containing mono-unsaturated fatty acids (such as beta-D-glucosyl-N-(9Z-octadecenoyl)-sphing-4-enine) are preferred as glucose donors for cholesterol glucosylation when compared with GlcCer containing same chain length of saturated fatty acids (such as beta-D-glucosyl-N-octadecanoyl-sphing-4-enine). Under specific conditions, may alternatively catalyze the reverse reaction, transferring glucose from cholesteryl 3-beta-D-glucoside to ceramide. Can also hydrolyze cholesteryl 3-beta-D-glucoside producing glucose and cholesterol. Catalyzes the hydrolysis of galactosylceramides/GalCers (such as beta-D-galactosyl-(1&lt;-&gt;1')-N-acylsphing-4-enine), as well as the transfer of galactose between GalCers and cholesterol in vitro, but with lower activity than with GlcCers. Contrary to GlcCer and GalCer, xylosylceramide/XylCer (such as beta-D-xyosyl-(1&lt;-&gt;1')-N-acylsphing-4-enine) is not a good substrate for hydrolysis, however it is a good xylose donor for transxylosylation activity to form cholesteryl 3-beta-D-xyloside. The protein is Lysosomal acid glucosylceramidase (GBA1) of Sus scrofa (Pig).